A 515-amino-acid chain; its full sequence is UDP-glucosyltransferase 2 (515 aa).

Residues methionine 1–glycine 20 form the signal peptide. The Lumenal portion of the chain corresponds to alanine 21–glutamine 471. N-linked (GlcNAc...) asparagine glycans are attached at residues asparagine 51, asparagine 236, and asparagine 303. Residues tyrosine 472 to valine 492 traverse the membrane as a helical segment. At lysine 493–asparagine 515 the chain is on the cytoplasmic side.

It belongs to the UDP-glycosyltransferase family. Glycosylated.

It localises to the endoplasmic reticulum membrane. The enzyme catalyses kermesate + UDP-alpha-D-glucose = carminate + UDP + 2 H(+). It carries out the reaction flavokermesate + UDP-alpha-D-glucose = flavokermesate 7-C-beta-D-glucoside + UDP + 2 H(+). Membrane-bound UDP-glucosyltransferase (UGT) which catalyzes the C-glucosylation of kermesate and flavokermesate to produce carminate and flavokermesate 7-C-beta-D-glucoside (dcll) respectively. Carminate is used as a deterrent against insect predators. This chain is UDP-glucosyltransferase 2, found in Dactylopius coccus (Cochineal).